The chain runs to 808 residues: Probable mannosyl-oligosaccharide glucosidase (808 aa).

The Cytoplasmic portion of the chain corresponds to 1–11 (MVSDMLGGNKR). A helical; Signal-anchor for type II membrane protein membrane pass occupies residues 12–31 (WILFGLLSFLLNCVLVSCSV). Topologically, residues 32–808 (EDIEKAANDS…LVVNIMSENY (777 aa)) are lumenal. N-linked (GlcNAc...) asparagine glycosylation occurs at N39. D580 acts as the Proton donor in catalysis. The Proton acceptor role is filled by E778.

The protein belongs to the glycosyl hydrolase 63 family.

The protein resides in the endoplasmic reticulum membrane. The catalysed reaction is N(4)-(alpha-D-Glc-(1-&gt;2)-alpha-D-Glc-(1-&gt;3)-alpha-D-Glc-(1-&gt;3)-alpha-D-Man-(1-&gt;2)-alpha-D-Man-(1-&gt;2)-alpha-D-Man-(1-&gt;3)-[alpha-D-Man-(1-&gt;2)-alpha-D-Man-(1-&gt;3)-[alpha-D-Man-(1-&gt;2)-alpha-D-Man-(1-&gt;6)]-alpha-D-Man-(1-&gt;6)]-beta-D-Man-(1-&gt;4)-beta-D-GlcNAc-(1-&gt;4)-beta-D-GlcNAc)-L-asparaginyl-[protein] + H2O = N(4)-(alpha-D-Glc-(1-&gt;3)-alpha-D-Glc-(1-&gt;3)-alpha-D-Man-(1-&gt;2)-alpha-D-Man-(1-&gt;2)-alpha-D-Man-(1-&gt;3)-[alpha-D-Man-(1-&gt;2)-alpha-D-Man-(1-&gt;3)-[alpha-D-Man-(1-&gt;2)-alpha-D-Man-(1-&gt;6)]-alpha-D-Man-(1-&gt;6)]-beta-D-Man-(1-&gt;4)-beta-D-GlcNAc-(1-&gt;4)-beta-D-GlcNAc)-L-asparaginyl-[protein] + beta-D-glucose. Functionally, cleaves the distal alpha 1,2-linked glucose residue from the Glc(3)Man(9)GlcNAc(2) oligosaccharide precursor highly specifically. The sequence is that of Probable mannosyl-oligosaccharide glucosidase from Schizosaccharomyces pombe (strain 972 / ATCC 24843) (Fission yeast).